The primary structure comprises 218 residues: Protein-lysine N-methyltransferase M142.8 (218 aa).

The protein belongs to the class I-like SAM-binding methyltransferase superfamily. EFM5 family.

It is found in the cytoplasm. Functionally, S-adenosyl-L-methionine-dependent protein-lysine N-methyltransferase that methylates elongation factor 1-alpha. This is Protein-lysine N-methyltransferase M142.8 from Caenorhabditis elegans.